The primary structure comprises 593 residues: Arginine--tRNA ligase (593 aa).

The 'HIGH' region signature appears at 138 to 148 (ANPTGPLHVGH).

This sequence belongs to the class-I aminoacyl-tRNA synthetase family. As to quaternary structure, monomer.

It localises to the cytoplasm. It carries out the reaction tRNA(Arg) + L-arginine + ATP = L-arginyl-tRNA(Arg) + AMP + diphosphate. In Burkholderia ambifaria (strain ATCC BAA-244 / DSM 16087 / CCUG 44356 / LMG 19182 / AMMD) (Burkholderia cepacia (strain AMMD)), this protein is Arginine--tRNA ligase.